The following is a 615-amino-acid chain: MAAVRGLRVSVKAEAPAGPALGLPSPEVESGLERGEPEPMEVEEGELEIVPVRRSLKELLPDTSRRYENKAGSFITGIDVTSKEAIEKKEQRAKRFHFRAEVNLAQRNVALDRDMMKKAIPKVRLETIYICGVDEMSTQDIFSYFKEYPPAHIEWLDDTSCNVVWLDEMTATRALINMSSLPAQDKMRSRDASEDKSSEKNKKDKQEDSSDDDETEEGEVEDENSSDVELDTLSQVEEESLLRNDLRPANKLAKGNRLFMRFATKDDKKELGAARRSQYYMKYGNPNYGGMKGILSNSWKRRYHSRRIQRDVIKKRALIGDDVGLTSYKHRHSGLVNVPEEPIEEEEEEEEEEEDQDMDADDRVVVEYHEELPGLKQPRERSLSRRSSASSSDSDEMDYDLELKMISTPSPKKSMKMTMYADEVESQLKSIRNPMRADSISTSNIKNRIGNKLPPEKFADVRHLLDEKRQHSCPRPAVSSTKPDIRQRLGKRPYSPEKAFSSNQVVRREPSSDVHSRLGVPRQDVKGLYSDTRERKSGGLWTRLGSTPKTKEKNTKKVDHRASGAEEDDSELQRAWGALIKEKEESRQKKSRLDSLPSLQIEVSRESSSGSEAES.

A Glycyl lysine isopeptide (Lys-Gly) (interchain with G-Cter in SUMO2) cross-link involves residue lysine 12. Residues 15 to 27 are compositionally biased toward low complexity; that stretch reads APAGPALGLPSPE. A disordered region spans residues 15–43; that stretch reads APAGPALGLPSPEVESGLERGEPEPMEVE. Position 25 is a phosphoserine (serine 25). Lysine 70 is covalently cross-linked (Glycyl lysine isopeptide (Lys-Gly) (interchain with G-Cter in SUMO2)). Serine 73 bears the Phosphoserine mark. An RNA recognition motif (RRM) domain region spans residues 126 to 187; sequence ETIYICGVDE…MSSLPAQDKM (62 aa). Positions 155–158 match the WLDD motif; essential for 7-methylguanosine-containing mRNA cap binding motif; sequence WLDD. Disordered stretches follow at residues 182–233 and 332–400; these read PAQD…LDTL and HSGL…MDYD. The span at 185–208 shows a compositional bias: basic and acidic residues; it reads DKMRSRDASEDKSSEKNKKDKQED. A Glycyl lysine isopeptide (Lys-Gly) (interchain with G-Cter in SUMO2) cross-link involves residue lysine 186. Phosphoserine occurs at positions 209 and 210. Composition is skewed to acidic residues over residues 209–230 and 341–360; these read SSDD…DVEL and EPIE…DMDA. Positions 361-383 are enriched in basic and acidic residues; sequence DDRVVVEYHEELPGLKQPRERSL. Threonine 408 is subject to Phosphothreonine. Phosphoserine is present on serine 410. Disordered stretches follow at residues 430-454 and 467-615; these read SIRN…NKLP and EKRQ…EAES. The span at 506–516 shows a compositional bias: basic and acidic residues; sequence VRREPSSDVHS. A Glycyl lysine isopeptide (Lys-Gly) (interchain with G-Cter in SUMO2) cross-link involves residue lysine 536. Basic and acidic residues-rich tracts occupy residues 549-564 and 580-593; these read KTKE…RASG and IKEK…KSRL. Position 563 is a phosphoserine (serine 563). Residues 606 to 615 are compositionally biased toward low complexity; the sequence is ESSSGSEAES. Serine 615 bears the Phosphoserine mark.

Belongs to the NCBP3 family. As to quaternary structure, component of an alternative cap-binding complex (CBC) composed of NCBP1/CBP80 and NCBP3. Interacts with SRRT, KPNA3, THOC5 and EIF4A3.

It localises to the nucleus. Its subcellular location is the cytoplasm. Functionally, associates with NCBP1/CBP80 to form an alternative cap-binding complex (CBC) which plays a key role in mRNA export. NCBP3 serves as adapter protein linking the capped RNAs (m7GpppG-capped RNA) to NCBP1/CBP80. Unlike the conventional CBC with NCBP2 which binds both small nuclear RNA (snRNA) and messenger (mRNA) and is involved in their export from the nucleus, the alternative CBC with NCBP3 does not bind snRNA and associates only with mRNA thereby playing a role in only mRNA export. The alternative CBC is particularly important in cellular stress situations such as virus infections and the NCBP3 activity is critical to inhibit virus growth. This chain is Nuclear cap-binding protein subunit 3, found in Mus musculus (Mouse).